Consider the following 349-residue polypeptide: sn-glycerol-3-phosphate import ATP-binding protein UgpC (349 aa).

Residues 4–234 enclose the ABC transporter domain; sequence ISLRDVRKSY…PATTFVAGFI (231 aa). 36-43 provides a ligand contact to ATP; it reads GPSGCGKS.

It belongs to the ABC transporter superfamily. sn-glycerol-3-phosphate importer (TC 3.A.1.1.3) family. The complex is composed of two ATP-binding proteins (UgpC), two transmembrane proteins (UgpA and UgpE) and a solute-binding protein (UgpB).

The protein resides in the cell inner membrane. The catalysed reaction is sn-glycerol 3-phosphate(out) + ATP + H2O = sn-glycerol 3-phosphate(in) + ADP + phosphate + H(+). Its function is as follows. Part of the ABC transporter complex UgpBAEC involved in sn-glycerol-3-phosphate (G3P) import. Responsible for energy coupling to the transport system. In Cereibacter sphaeroides (strain ATCC 17023 / DSM 158 / JCM 6121 / CCUG 31486 / LMG 2827 / NBRC 12203 / NCIMB 8253 / ATH 2.4.1.) (Rhodobacter sphaeroides), this protein is sn-glycerol-3-phosphate import ATP-binding protein UgpC.